Reading from the N-terminus, the 110-residue chain is Small ribosomal subunit protein eS25 (110 aa).

The segment at 1–37 (MGGASKKPISTMEKRLKKEAEKQQKAEEKKKGPSKTG) is disordered. The segment covering 12–37 (MEKRLKKEAEKQQKAEEKKKGPSKTG) has biased composition (basic and acidic residues).

The protein belongs to the eukaryotic ribosomal protein eS25 family.

The polypeptide is Small ribosomal subunit protein eS25 (rps25e) (Saccharolobus solfataricus (strain ATCC 35092 / DSM 1617 / JCM 11322 / P2) (Sulfolobus solfataricus)).